Here is a 378-residue protein sequence, read N- to C-terminus: Chaperone protein DnaJ (378 aa).

The 66-residue stretch at 5–70 (DFYEVLGLSK…QKRAAYDQYG (66 aa)) folds into the J domain. Residues 133 to 211 (GITKEIRIPT…CHGDGRVERY (79 aa)) form a CR-type zinc finger. 8 residues coordinate Zn(2+): Cys146, Cys149, Cys163, Cys166, Cys185, Cys188, Cys199, and Cys202. CXXCXGXG motif repeat units follow at residues 146-153 (CDKCHGSG), 163-170 (CSTCHGAG), 185-192 (CPTCHGRG), and 199-206 (CSKCHGDG).

This sequence belongs to the DnaJ family. In terms of assembly, homodimer. Zn(2+) is required as a cofactor.

It localises to the cytoplasm. Participates actively in the response to hyperosmotic and heat shock by preventing the aggregation of stress-denatured proteins and by disaggregating proteins, also in an autonomous, DnaK-independent fashion. Unfolded proteins bind initially to DnaJ; upon interaction with the DnaJ-bound protein, DnaK hydrolyzes its bound ATP, resulting in the formation of a stable complex. GrpE releases ADP from DnaK; ATP binding to DnaK triggers the release of the substrate protein, thus completing the reaction cycle. Several rounds of ATP-dependent interactions between DnaJ, DnaK and GrpE are required for fully efficient folding. Also involved, together with DnaK and GrpE, in the DNA replication of plasmids through activation of initiation proteins. The chain is Chaperone protein DnaJ from Proteus mirabilis (strain HI4320).